Reading from the N-terminus, the 181-residue chain is GATA zinc finger domain-containing protein 22 (181 aa).

The GATA-type zinc-finger motif lies at 118-145 (CQICLTNNTPYWRWSVIENNKIRVCNRC).

This is GATA zinc finger domain-containing protein 22 (gtaV) from Dictyostelium discoideum (Social amoeba).